We begin with the raw amino-acid sequence, 113 residues long: Protein SPIRAL1-like 1 (113 aa).

A compositionally biased stretch (gly residues) spans 1–12 (MGRGVSVGGGQS). The tract at residues 1–50 (MGRGVSVGGGQSSLGYLFGSGEAPKPAINNAPAPSSETLPISADPSPKHV) is disordered. Positions 23–34 (APKPAINNAPAP) are enriched in low complexity. Serine 69 bears the Phosphoserine mark. The segment at 79–113 (QNTGNFLTDRPSTKVHAAPGGGSSLDYLFGGGGSN) is disordered. A compositionally biased stretch (gly residues) spans 97 to 113 (PGGGSSLDYLFGGGGSN).

It belongs to the SPIRAL1 family. Detected in pollen of mature flowers.

Functionally, acts redundantly with SPR1 in maintaining the cortical microtubules organization essential for anisotropic cell growth. The polypeptide is Protein SPIRAL1-like 1 (SP1L1) (Arabidopsis thaliana (Mouse-ear cress)).